A 495-amino-acid chain; its full sequence is Lysine--tRNA ligase (495 aa).

The Mg(2+) site is built by E406 and E413.

The protein belongs to the class-II aminoacyl-tRNA synthetase family. Homodimer. It depends on Mg(2+) as a cofactor.

It is found in the cytoplasm. The enzyme catalyses tRNA(Lys) + L-lysine + ATP = L-lysyl-tRNA(Lys) + AMP + diphosphate. The chain is Lysine--tRNA ligase from Leptospira interrogans serogroup Icterohaemorrhagiae serovar Lai (strain 56601).